The following is a 179-amino-acid chain: Peptide deformylase 2 (179 aa).

2 residues coordinate Fe cation: cysteine 101 and histidine 143. The active site involves glutamate 144. Residue histidine 147 participates in Fe cation binding.

It belongs to the polypeptide deformylase family. Requires Fe(2+) as cofactor.

The catalysed reaction is N-terminal N-formyl-L-methionyl-[peptide] + H2O = N-terminal L-methionyl-[peptide] + formate. Removes the formyl group from the N-terminal Met of newly synthesized proteins. Requires at least a dipeptide for an efficient rate of reaction. N-terminal L-methionine is a prerequisite for activity but the enzyme has broad specificity at other positions. This Pseudomonas syringae pv. tomato (strain ATCC BAA-871 / DC3000) protein is Peptide deformylase 2.